The sequence spans 89 residues: N.vectensis toxin 7 (89 aa).

A signal peptide spans 1 to 21 (MASFFKIAVICLVMLVVCSNA). 3 cysteine pairs are disulfide-bonded: cysteine 44/cysteine 77, cysteine 46/cysteine 69, and cysteine 62/cysteine 78.

As to expression, expressed in ectodermal gland cells.

In terms of biological role, probable toxin. The protein is N.vectensis toxin 7 of Nematostella vectensis (Starlet sea anemone).